The sequence spans 317 residues: Brain-specific serine protease 4 (317 aa).

Residues Met-1–Ala-32 form the signal peptide. The region spanning Val-50–Gln-290 is the Peptidase S1 domain. Asn-70 carries an N-linked (GlcNAc...) asparagine glycan. Cys-75 and Cys-91 are oxidised to a cystine. Active-site charge relay system residues include His-90 and Asp-141. Cystine bridges form between Cys-175–Cys-248, Cys-208–Cys-227, and Cys-238–Cys-266. Ser-242 acts as the Charge relay system in catalysis.

This sequence belongs to the peptidase S1 family. As to expression, expressed abundantly in the epithelial cells of the airways, including trachea, esophagus and fetal lung. Scarce in adult lung. Expressed at low levels in placenta, pancreas, prostate and thyroid gland.

It is found in the secreted. Its function is as follows. Preferentially cleaves the synthetic substrate H-D-Leu-Thr-Arg-pNA compared to tosyl-Gly-Pro-Arg-pNA. The chain is Brain-specific serine protease 4 (PRSS22) from Homo sapiens (Human).